The sequence spans 599 residues: Elongation factor 4 (599 aa).

Positions 4-185 (KNIRNFSIIA…VIIKKVPSPK (182 aa)) constitute a tr-type G domain. GTP contacts are provided by residues 16-21 (DHGKST) and 132-135 (NKVD).

This sequence belongs to the TRAFAC class translation factor GTPase superfamily. Classic translation factor GTPase family. LepA subfamily.

The protein resides in the cell membrane. It carries out the reaction GTP + H2O = GDP + phosphate + H(+). Its function is as follows. Required for accurate and efficient protein synthesis under certain stress conditions. May act as a fidelity factor of the translation reaction, by catalyzing a one-codon backward translocation of tRNAs on improperly translocated ribosomes. Back-translocation proceeds from a post-translocation (POST) complex to a pre-translocation (PRE) complex, thus giving elongation factor G a second chance to translocate the tRNAs correctly. Binds to ribosomes in a GTP-dependent manner. The sequence is that of Elongation factor 4 from Mycoplasmoides gallisepticum (strain R(low / passage 15 / clone 2)) (Mycoplasma gallisepticum).